Reading from the N-terminus, the 261-residue chain is MDLIPRSIIRTLFRFWTELTSQSSSLAIHELEVAKYKTFASLQYLTCLIVLPWAISISLQNSLESWVTNWWNTGQSKKIFDYLQEENAIRKFEKIEELFLLEIMVKDYSETPSQDIRVEMQKKMIQLVKIYNQDCIHIISHLLANLIGLVLLSVCLILGKKKLGILNSWIQEVFYSLSDTMKAFSILLVTDLCIGFHSPHGWELMINWIFENYGFAHNERIISGLVSTFPVILDTIFKYWIFRRLNRISPSLVVIYHSMNE.

Helical transmembrane passes span 138-158 (IISH…CLIL), 186-206 (ILLV…ELMI), and 221-241 (IISG…KYWI).

Belongs to the CemA family.

The protein resides in the plastid. It localises to the chloroplast inner membrane. The catalysed reaction is K(+)(in) + H(+)(out) = K(+)(out) + H(+)(in). Its function is as follows. Contributes to K(+)/H(+) antiport activity by supporting proton efflux to control proton extrusion and homeostasis in chloroplasts in a light-dependent manner to modulate photosynthesis. Prevents excessive induction of non-photochemical quenching (NPQ) under continuous-light conditions. Indirectly promotes efficient inorganic carbon uptake into chloroplasts. This chain is Potassium/proton antiporter CemA, found in Cryptomeria japonica (Japanese cedar).